Here is a 647-residue protein sequence, read N- to C-terminus: MTANPYLRRLPRRRAVSFLLAPALAAATVAGASPAQAIAGAPVPPGGEPLYTEQDLAVNGREGFPNYRIPALTVTPDGDLLASYDGRPTGIDAPGPNSILQRRSTDGGRTWGEQQVVSAGQTTAPIKGFSDPSYLVDRETGTIFNFHVYSQRQGFAGSRPGTDPADPNVLHANVATSTDGGLTWSHRTITADITPDPGWRSRFAASGEGIQLRYGPHAGRLIQQYTIINAAGAFQAVSVYSDDHGRTWRAGEAVGVGMDENKTVELSDGRVLLNSRDSARSGYRKVAVSTDGGHSYGPVTIDRDLPDPTNNASIIRAFPDAPAGSARAKVLLFSNAASQTSRSQGTIRMSCDDGQTWPVSKVFQPGSMSYSTLTALPDGTYGLLYEPGTGIRYANFNLAWLGGICAPFTIPDVALEPGQQVTVPVAVTNQSGIAVPKPSLQLDASPDWQVQGSVEPLMPGRQAKGQVTITVPAGTTPGRYRVGATLRTSAGNASTTFTVTVGLLDQARMSIADVDSEETAREDGRASNVIDGNPSTFWHTEWSRADAPGYPHRISLDLGGTHTISGLQYTRRQNSANEQVADYEIYTSLNGTTWDGPVASGRFTTSLAPQRAVFPARDARYIRLVALSEQTGHKYAAVAELEVEGQR.

The N-terminal stretch at 1-37 (MTANPYLRRLPRRRAVSFLLAPALAAATVAGASPAQA) is a signal peptide. Arg68 contacts substrate. The Proton acceptor role is filled by Asp92. BNR repeat units follow at residues 102-113 (RRSTDGGRTWGE), 175-186 (ATSTDGGLTWSH), and 239-250 (VYSDDHGRTWRA). The Nucleophile role is filled by Glu260. Arg276 provides a ligand contact to substrate. BNR repeat units lie at residues 287 to 298 (AVSTDGGHSYGP) and 348 to 359 (RMSCDDGQTWPV). The Nucleophile role is filled by Tyr370. The F5/8 type C domain maps to 496–646 (TFTVTVGLLD…AVAELEVEGQ (151 aa)).

Belongs to the glycosyl hydrolase 33 family.

Its subcellular location is the secreted. It carries out the reaction Hydrolysis of alpha-(2-&gt;3)-, alpha-(2-&gt;6)-, alpha-(2-&gt;8)- glycosidic linkages of terminal sialic acid residues in oligosaccharides, glycoproteins, glycolipids, colominic acid and synthetic substrates.. Functionally, to release sialic acids for use as carbon and energy sources for this non-pathogenic bacterium while in pathogenic microorganisms, sialidases have been suggested to be pathogenic factors. The sequence is that of Sialidase (nedA) from Micromonospora viridifaciens.